Here is a 440-residue protein sequence, read N- to C-terminus: 2-methylisoborneol synthase (440 aa).

The disordered stretch occupies residues 1 to 116; the sequence is MPDSGPLGPH…SPAPAEPAAG (116 aa). Low complexity predominate over residues 17–27; it reads TPATTVPDAPA. The segment covering 48-58 has biased composition (pro residues); sequence PPVPIPSPSPP. Residues 59–75 are compositionally biased toward low complexity; the sequence is SGSASAAADTPDATTVG. Residues 102–111 are compositionally biased toward pro residues; that stretch reads PSLPGSPAPA. Asp-197, Asp-198, Glu-202, Asn-345, Ser-349, and Glu-353 together coordinate Mg(2+).

The protein belongs to the terpene synthase family. 2-methylisoborneol synthase subfamily. Mg(2+) serves as cofactor.

It catalyses the reaction (E)-2-methylgeranyl diphosphate + H2O = 2-methylisoborneol + diphosphate. Catalyzes the cyclization of 2-methylgeranyl diphosphate (2-MeGPP) to 2-methylisoborneol (2-MIB), which likely involves the intermediacy of 2-methyllinalyl diphosphate. This chain is 2-methylisoborneol synthase, found in Streptomyces ambofaciens (strain ATCC 23877 / 3486 / DSM 40053 / JCM 4204 / NBRC 12836 / NRRL B-2516).